The following is a 316-amino-acid chain: UDP-N-acetylenolpyruvoylglucosamine reductase (316 aa).

An FAD-binding PCMH-type domain is found at 27-225 (VGGKAERFYR…KTAINALLKK (199 aa)). The active site involves Arg-190. The active-site Proton donor is Ser-239. Glu-309 is a catalytic residue.

Belongs to the MurB family. Requires FAD as cofactor.

It localises to the cytoplasm. It catalyses the reaction UDP-N-acetyl-alpha-D-muramate + NADP(+) = UDP-N-acetyl-3-O-(1-carboxyvinyl)-alpha-D-glucosamine + NADPH + H(+). Its pathway is cell wall biogenesis; peptidoglycan biosynthesis. Its function is as follows. Cell wall formation. The sequence is that of UDP-N-acetylenolpyruvoylglucosamine reductase from Coxiella burnetii (strain RSA 331 / Henzerling II).